A 157-amino-acid polypeptide reads, in one-letter code: Protein SINE4 (157 aa).

The 54-residue stretch at 104–157 (VTSSSDTTKAKKKTTIRRFVSVTMVLLLSWVLVVLMNHFDHLSMNTQIITLVPT) folds into the KASH domain. A helical transmembrane segment spans residues 122 to 142 (FVSVTMVLLLSWVLVVLMNHF). Residues 154-157 (LVPT) carry the Required for nuclear localization motif.

Interacts with SUN1 and SUN2.

Its subcellular location is the nucleus membrane. This is Protein SINE4 from Arabidopsis thaliana (Mouse-ear cress).